A 702-amino-acid chain; its full sequence is Pheromone-processing carboxypeptidase KEX1 (702 aa).

The N-terminal stretch at 1 to 19 is a signal peptide; it reads MKLILSTLIVFIHTLLVSA. At 20–555 the chain is on the lumenal side; the sequence is LPTKEGSDPN…SDSTSSKFTR (536 aa). N-linked (GlcNAc...) asparagine glycans are attached at residues asparagine 85 and asparagine 122. Active-site residues include serine 184 and aspartate 394. Residues asparagine 441 and asparagine 449 are each glycosylated (N-linked (GlcNAc...) asparagine). Histidine 452 is a catalytic residue. The tract at residues 491-548 is disordered; the sequence is SRKESDASADGEENAGSDKVPGDSPSQTIDPMISSSTASSSSVESSLSSSTASADSDS. Residues 524–548 show a composition bias toward low complexity; the sequence is SSSTASSSSVESSLSSSTASADSDS. Residues 556 to 576 form a helical membrane-spanning segment; it reads LIQLAVILVIFWGVYVLYASY. Topologically, residues 577–702 are cytoplasmic; it reads KSRPSSIIKK…THNQKQKPMN (126 aa). Disordered stretches follow at residues 582 to 603 and 660 to 702; these read SIIKKPTNNTSNVTRSSAGKKK and IELG…KPMN. Composition is skewed to polar residues over residues 587–598 and 692–702; these read PTNNTSNVTRSS and ATHNQKQKPMN.

Belongs to the peptidase S10 family.

The protein resides in the golgi apparatus. The protein localises to the trans-Golgi network membrane. The enzyme catalyses Preferential release of a C-terminal arginine or lysine residue.. Its function is as follows. Protease with a carboxypeptidase B-like function involved in the C-terminal processing of the lysine and arginine residues from protein precursors. Promotes cell fusion and is involved in the programmed cell death. This chain is Pheromone-processing carboxypeptidase KEX1 (KEX1), found in Candida albicans (strain SC5314 / ATCC MYA-2876) (Yeast).